Consider the following 493-residue polypeptide: Acetylcholine receptor subunit epsilon (493 aa).

A signal peptide spans 1-20; it reads MARAPLGVLLLLGLLGRGVG. Residues 21–239 are Extracellular-facing; the sequence is KNEELRLYHH…VIYSLIIRRK (219 aa). N-linked (GlcNAc...) asparagine glycosylation is found at N86 and N161. C148 and C162 are oxidised to a cystine. The chain crosses the membrane as a helical span at residues 240 to 264; it reads PLFYVINIIVPCVLISGLVLLAYFL. Topologically, residues 265–272 are cytoplasmic; that stretch reads PAQAGGQK. A helical transmembrane segment spans residues 273 to 291; it reads CTVSINVLLAQTVFLFLIA. At 292-306 the chain is on the extracellular side; sequence QKIPETSLSVPLLGR. Residues 307 to 328 traverse the membrane as a helical segment; the sequence is FLIFVMVVATLIVMNCVIVLNV. Residues 329 to 456 lie on the Cytoplasmic side of the membrane; it reads SQRTPTTHAM…WVRMGNALDN (128 aa). The helical transmembrane segment at 457 to 480 threads the bilayer; that stretch reads ICFWAALVLFSVGSSLIFLGAYFN. Residues 481 to 493 lie on the Extracellular side of the membrane; the sequence is RVPDLPYAPCIQP.

The protein belongs to the ligand-gated ion channel (TC 1.A.9) family. Acetylcholine receptor (TC 1.A.9.1) subfamily. Epsilon/CHRNE sub-subfamily. In terms of assembly, pentamer of two alpha chains, and one each of the beta, delta, and gamma (in immature muscle) or epsilon (in mature muscle) chains. The muscle heteropentamer composed of alpha-1, beta-1, delta, epsilon subunits interacts with the alpha-conotoxin ImII.

The protein resides in the postsynaptic cell membrane. Its subcellular location is the cell membrane. It carries out the reaction K(+)(in) = K(+)(out). The enzyme catalyses Na(+)(in) = Na(+)(out). Its function is as follows. After binding acetylcholine, the AChR responds by an extensive change in conformation that affects all subunits and leads to opening of an ion-conducting channel across the plasma membrane. The protein is Acetylcholine receptor subunit epsilon of Homo sapiens (Human).